A 337-amino-acid chain; its full sequence is 2-oxoglutarate-Fe(II) type oxidoreductase (337 aa).

Residues 179 to 282 (AIATLRYLHY…RYSIPFFFTG (104 aa)) form the Fe2OG dioxygenase domain. 3 residues coordinate Fe cation: H205, D207, and H263. R273 contributes to the 2-oxoglutarate binding site.

It belongs to the iron/ascorbate-dependent oxidoreductase family. Requires Fe(2+) as cofactor. In terms of tissue distribution, endocrocin is specifically produced in conidia.

Its pathway is secondary metabolite biosynthesis. Its function is as follows. 2-oxoglutarate-Fe(II) type oxidoreductase; part of the gene cluster that mediates the biosynthesis of endocrocin, a simple anthraquinone interesting for many biotechnological applications. The pathway begins with the synthesis of atrochrysone thioester by the polyketide synthase (PKS) encA. The atrochrysone carboxyl ACP thioesterase encB then breaks the thioester bond and releases the atrochrysone carboxylic acid from encA. The atrochrysone carboxylic acid is then converted to endocrocin anthrone which is further oxidized into endocrocin by encC. The exact function of encD has not been identified yet, but it negatively regulates endocrocin production, likely through the modification of endocrocin itself. In Aspergillus fumigatus (strain ATCC MYA-4609 / CBS 101355 / FGSC A1100 / Af293) (Neosartorya fumigata), this protein is 2-oxoglutarate-Fe(II) type oxidoreductase.